A 141-amino-acid chain; its full sequence is ATP synthase epsilon chain (141 aa).

It belongs to the ATPase epsilon chain family. In terms of assembly, F-type ATPases have 2 components, CF(1) - the catalytic core - and CF(0) - the membrane proton channel. CF(1) has five subunits: alpha(3), beta(3), gamma(1), delta(1), epsilon(1). CF(0) has three main subunits: a, b and c.

It localises to the cell inner membrane. In terms of biological role, produces ATP from ADP in the presence of a proton gradient across the membrane. The chain is ATP synthase epsilon chain from Bordetella avium (strain 197N).